Consider the following 420-residue polypeptide: MNILNNNLYGMDKEIYEIIKNEKLRQNNVIELIASENFVSSAVLEAQGSILTNKYAEGYPSKRFYNGCDEVDKAEVLAIERAKKLFNCKYANVQPHSGSQANQAVYLALLQPCDTILGMSLDSGGHLTHGAAPNISGKWFNTVAYNVDKETYLIDYDEIKRLAVLHNPKLLIAGFSAYPRKIDFARFREIADKVGAYLMADIAHIAGLVATGEHQSPIPYAHVVTSTTHKTLRGPRGGLILSDYEEIGKKINSALFPGLQGGPLMHVIAAKAVAFLENLQPEYKCYIKQVISNAKALAISLQERGYDILTGGTDNHIVLVDLRKDGITGKCAANSLDRAGITCNKNAIPFDTTSPFVTSGIRFGTSACTTKGFKEKDFVLIGHMVAEILDGLKNNEDNSKTEQKVLSEVKKLIKLFPFYD.

(6S)-5,6,7,8-tetrahydrofolate contacts are provided by residues leucine 121 and 125–127 (GHL). The residue at position 230 (lysine 230) is an N6-(pyridoxal phosphate)lysine. (6S)-5,6,7,8-tetrahydrofolate-binding positions include glutamate 246 and 354 to 356 (SPF).

The protein belongs to the SHMT family. Homodimer. Requires pyridoxal 5'-phosphate as cofactor.

The protein resides in the cytoplasm. The catalysed reaction is (6R)-5,10-methylene-5,6,7,8-tetrahydrofolate + glycine + H2O = (6S)-5,6,7,8-tetrahydrofolate + L-serine. The protein operates within one-carbon metabolism; tetrahydrofolate interconversion. Its pathway is amino-acid biosynthesis; glycine biosynthesis; glycine from L-serine: step 1/1. Catalyzes the reversible interconversion of serine and glycine with tetrahydrofolate (THF) serving as the one-carbon carrier. This reaction serves as the major source of one-carbon groups required for the biosynthesis of purines, thymidylate, methionine, and other important biomolecules. Also exhibits THF-independent aldolase activity toward beta-hydroxyamino acids, producing glycine and aldehydes, via a retro-aldol mechanism. In Rickettsia typhi (strain ATCC VR-144 / Wilmington), this protein is Serine hydroxymethyltransferase.